A 279-amino-acid chain; its full sequence is Large ribosomal subunit protein uL2 (279 aa).

Disordered stretches follow at residues 34-58 (LRPL…GGGH) and 225-279 (VMNP…KNKR). The segment covering 251-268 (GKPEGRTRRPNKESDKLI) has biased composition (basic and acidic residues). Residues 269–279 (VRRRRTGKNKR) show a composition bias toward basic residues.

This sequence belongs to the universal ribosomal protein uL2 family. In terms of assembly, part of the 50S ribosomal subunit. Forms a bridge to the 30S subunit in the 70S ribosome.

One of the primary rRNA binding proteins. Required for association of the 30S and 50S subunits to form the 70S ribosome, for tRNA binding and peptide bond formation. It has been suggested to have peptidyltransferase activity; this is somewhat controversial. Makes several contacts with the 16S rRNA in the 70S ribosome. This Micrococcus luteus (strain ATCC 4698 / DSM 20030 / JCM 1464 / CCM 169 / CCUG 5858 / IAM 1056 / NBRC 3333 / NCIMB 9278 / NCTC 2665 / VKM Ac-2230) (Micrococcus lysodeikticus) protein is Large ribosomal subunit protein uL2.